The following is a 636-amino-acid chain: MGSLLSIVLRSATRIIRPIIPSSVLSLLSGPKPVHPLQTLQFDKEAILEKYQAERAKRLRQDGVSQFKSARSGAYDRFRQDVARPQSREPIEAETKVLIVGAGFAGLVAAVKLDQQGVQDFRIVDKAAGFGGTWYWNQYPGAACDVESLIYLPFLEETGYIPSRRFCYGPEIREQVNRVVAKWDLARRSHLSTEITSMTWDESILRWHVKTNHGDHFITQFVVMATGTFHEPKLPGIPGIENFKGDHFHSGRWDYRITGGDETGNMSQLANKTVGIIGTGASAVQLVPKLARDAKKLYVFQRTPSSIRFRDNSLYDTPSLKKSLPPGWQRQRMTDFANILTGQVVDQDCDALEGLQELTMRAILKEASDAGVTVQPEQIPELMQLADFRLMQQIRGQVDEIVKDQETAAKLKPWYSFMCKRPTFHNDYLAAFNNPNVELVDTDGQGVSYLTETAVVANGREYEVDLLVYSTGFDFDVEANFYRRTGIQLVGSRGRTFDEKWDEKGPSTLFGVHIREFPNLLYVGPAQTGVTANWTHTTYAVGDHIAEFVAKSLRDGQYQAFEPTEEAEEEWGRRNEEGSEMRLLFAQSCPPGYYNREGKPEEIPARWAYFPKGIIEWTRITQEWREKGDYQGMDKR.

FAD-binding positions include aspartate 125, 133–136, aspartate 145, tyrosine 151, and isoleucine 195; that span reads TWYW. 143 to 145 serves as a coordination point for NADP(+); the sequence is ACD. NADP(+) contacts are provided by residues 279-285, 302-303, and 420-421; these read TGASAVQ, RT, and KR. FAD is bound at residue tryptophan 534.

Belongs to the FAD-binding monooxygenase family. It depends on FAD as a cofactor.

It carries out the reaction ketocytochalasin + NADPH + O2 + H(+) = iso-precytochalasin + NADP(+) + H2O. The catalysed reaction is iso-precytochalasin + NADPH + O2 + H(+) = cytochalasin Z16 + NADP(+) + H2O. The protein operates within mycotoxin biosynthesis. Its function is as follows. Ketocytochalasin monooxygenase; part of the gene cluster that mediates the biosynthesis of a family of the mycotoxins cytochalasins E and K. The hybrid PKS-NRPS synthetase ccsA and the enoyl reductase ccsC are responsible for fusion of phenylalanine with an octaketide backbone and subsequent release of the stable tetramic acid precursor. The polyketide synthase module (PKS) of the PKS-NRPS ccsA is responsible for the synthesis of the octaketide backbone. The downstream nonribosomal peptide synthetase (NRPS) amidates the carboxyl end of the octaketide with a phenylalanine. A reductase-like domain (R) at the C-terminus catalyzes the reductive release of the polyketide-amino acid intermediate. Because ccsA lacks a designated enoylreductase (ER) domain, the required activity is provided the enoyl reductase ccsC. Upon formation of the 11-membered carbocycle-fused perhydroisoindolone intermediate, a number of oxidative steps are required to afford the final cytochalasin E and K, including two hydroxylations at C17 and C18, one alcohol oxidation at C17, one epoxidation at C6 and C7 and two Baeyer-Villiger oxidations. The oxidative modification at C17, C18 and the C6-C7 epoxidation are likely to be catalyzed by the two cytochrome P450 oxygenases ccsD and ccsG. CcsD may be responsible for the epoxidation of the C6-C7 double bond. CcsG may be responsible for the successive oxidative modifications at C17 and C18. The double Baeyer-Villiger oxidations of ketocytochalasin to precytochalasin and cytochalasin Z(16) are among the final steps leading to cytochalasin E and K and are catalyzed by ccsB. The first oxygen insertion step follows that of the classic BVMO mechanism, generating the ester precytochalasin. Release of precytochalasin into an aqueous environment can generate the shunt product iso-precytochalasin through spontaneous isomerization. Alternatively, precytochalasin can undergo further oxidation by ccsB to yield the in-line carbonate-containing cytochalasin Z(16). Cytochalasin Z(16) is a precursor to cytochalasin E and cytochalasin K, whereas iso-precytochalasin is a precursor to cytochalasin Z(17) and rosellichalasin. The hydrolyase ccsE may catalyze hydrolysis of epoxide bond in cytochalasin E to afford cytochalasin K. The function of ccsF has not been assigned but it may play a role in post-PKS-NRPS biosynthetic step, resistance or transport of cytochalasins and related PKS-NRPS products. The protein is Ketocytochalasin monooxygenase of Aspergillus clavatus (strain ATCC 1007 / CBS 513.65 / DSM 816 / NCTC 3887 / NRRL 1 / QM 1276 / 107).